The chain runs to 188 residues: Accessory gene regulator protein B (188 aa).

4 helical membrane-spanning segments follow: residues Leu-49–Leu-69, Ile-104–Ala-126, Ile-143–Tyr-163, and Phe-166–Glu-186.

The protein belongs to the AgrB family.

It localises to the cell membrane. Functionally, essential for the production of a quorum sensing system signal molecule, the autoinducing peptide (AIP). This quorum sensing system is responsible for the regulation of the expression of virulence factor genes. Involved in the proteolytic processing of AgrD, the precursor of AIP. The polypeptide is Accessory gene regulator protein B (Staphylococcus intermedius).